The chain runs to 475 residues: Ribulose bisphosphate carboxylase large chain (475 aa).

Positions 1-2 (MS) are excised as a propeptide. At Pro3 the chain carries N-acetylproline. The residue at position 14 (Lys14) is an N6,N6,N6-trimethyllysine. 2 residues coordinate substrate: Asn123 and Thr173. The Proton acceptor role is filled by Lys175. Lys177 provides a ligand contact to substrate. Mg(2+)-binding residues include Lys201, Asp203, and Glu204. Position 201 is an N6-carboxylysine (Lys201). Catalysis depends on His294, which acts as the Proton acceptor. The substrate site is built by Arg295, His327, and Ser379.

The protein belongs to the RuBisCO large chain family. Type I subfamily. Heterohexadecamer of 8 large chains and 8 small chains; disulfide-linked. The disulfide link is formed within the large subunit homodimers. It depends on Mg(2+) as a cofactor. In terms of processing, the disulfide bond which can form in the large chain dimeric partners within the hexadecamer appears to be associated with oxidative stress and protein turnover.

The protein localises to the plastid. It localises to the chloroplast. The enzyme catalyses 2 (2R)-3-phosphoglycerate + 2 H(+) = D-ribulose 1,5-bisphosphate + CO2 + H2O. It catalyses the reaction D-ribulose 1,5-bisphosphate + O2 = 2-phosphoglycolate + (2R)-3-phosphoglycerate + 2 H(+). RuBisCO catalyzes two reactions: the carboxylation of D-ribulose 1,5-bisphosphate, the primary event in carbon dioxide fixation, as well as the oxidative fragmentation of the pentose substrate in the photorespiration process. Both reactions occur simultaneously and in competition at the same active site. The polypeptide is Ribulose bisphosphate carboxylase large chain (Chloranthus spicatus (Chulantree)).